Here is a 248-residue protein sequence, read N- to C-terminus: 3-oxoacyl-[acyl-carrier-protein] reductase FabG (248 aa).

NADP(+) contacts are provided by residues 14-17, 64-65, and asparagine 91; these read GGSR and DV. Residue serine 143 coordinates substrate. Tyrosine 156 serves as the catalytic Proton acceptor. NADP(+) is bound by residues 156 to 160 and isoleucine 189; that span reads YAAAK.

This sequence belongs to the short-chain dehydrogenases/reductases (SDR) family. Homotetramer.

The enzyme catalyses a (3R)-hydroxyacyl-[ACP] + NADP(+) = a 3-oxoacyl-[ACP] + NADPH + H(+). It functions in the pathway lipid metabolism; fatty acid biosynthesis. Functionally, catalyzes the NADPH-dependent reduction of beta-ketoacyl-ACP substrates to beta-hydroxyacyl-ACP products, the first reductive step in the elongation cycle of fatty acid biosynthesis. This Chlamydia pneumoniae (Chlamydophila pneumoniae) protein is 3-oxoacyl-[acyl-carrier-protein] reductase FabG (fabG).